An 814-amino-acid polypeptide reads, in one-letter code: Lon protease 1 (814 aa).

Residues 1 to 17 (MTDDRDKTNEDPEKIIE) show a composition bias toward basic and acidic residues. The interval 1-28 (MTDDRDKTNEDPEKIIEADFNPEDPDDA) is disordered. The region spanning 49–245 (LPIIPLRPRP…KVLVLLKKEL (197 aa)) is the Lon N-terminal domain. ATP is bound at residue 398 to 405 (GPPGVGKT). A Lon proteolytic domain is found at 633 to 814 (EDVPGVVTGL…YRDVYQVAFG (182 aa)). Catalysis depends on residues Ser721 and Lys764.

This sequence belongs to the peptidase S16 family. As to quaternary structure, homohexamer. Organized in a ring with a central cavity.

The protein resides in the cytoplasm. The catalysed reaction is Hydrolysis of proteins in presence of ATP.. In terms of biological role, ATP-dependent serine protease that mediates the selective degradation of mutant and abnormal proteins as well as certain short-lived regulatory proteins. Required for cellular homeostasis and for survival from DNA damage and developmental changes induced by stress. Degrades polypeptides processively to yield small peptide fragments that are 5 to 10 amino acids long. Binds to DNA in a double-stranded, site-specific manner. The protein is Lon protease 1 of Syntrophotalea carbinolica (strain DSM 2380 / NBRC 103641 / GraBd1) (Pelobacter carbinolicus).